A 237-amino-acid chain; its full sequence is tRNA (guanine-N(7)-)-methyltransferase (237 aa).

Residues Glu-65, Glu-90, Asp-117, and Asp-140 each contribute to the S-adenosyl-L-methionine site. The active site involves Asp-140. Residues Lys-144, Asp-176, and 212-215 (TKFE) contribute to the substrate site. The disordered stretch occupies residues 197 to 217 (TCGPRQFSPRGERPETKFERR). Residues 206 to 217 (RGERPETKFERR) are compositionally biased toward basic and acidic residues.

This sequence belongs to the class I-like SAM-binding methyltransferase superfamily. TrmB family.

It catalyses the reaction guanosine(46) in tRNA + S-adenosyl-L-methionine = N(7)-methylguanosine(46) in tRNA + S-adenosyl-L-homocysteine. It participates in tRNA modification; N(7)-methylguanine-tRNA biosynthesis. Its function is as follows. Catalyzes the formation of N(7)-methylguanine at position 46 (m7G46) in tRNA. The polypeptide is tRNA (guanine-N(7)-)-methyltransferase (Alkalilimnicola ehrlichii (strain ATCC BAA-1101 / DSM 17681 / MLHE-1)).